The sequence spans 504 residues: Pup--protein ligase (504 aa).

Mg(2+) is bound at residue Glu30. Arg74 contributes to the ATP binding site. Tyr76 is a binding site for Mg(2+). Asp78 functions as the Proton acceptor in the catalytic mechanism. Glu84 contacts Mg(2+). ATP-binding residues include Thr87 and Trp459.

It belongs to the Pup ligase/Pup deamidase family. Pup-conjugating enzyme subfamily.

It catalyses the reaction ATP + [prokaryotic ubiquitin-like protein]-L-glutamate + [protein]-L-lysine = ADP + phosphate + N(6)-([prokaryotic ubiquitin-like protein]-gamma-L-glutamyl)-[protein]-L-lysine.. The protein operates within protein degradation; proteasomal Pup-dependent pathway. It participates in protein modification; protein pupylation. In terms of biological role, catalyzes the covalent attachment of the prokaryotic ubiquitin-like protein modifier Pup to the proteasomal substrate proteins, thereby targeting them for proteasomal degradation. This tagging system is termed pupylation. The ligation reaction involves the side-chain carboxylate of the C-terminal glutamate of Pup and the side-chain amino group of a substrate lysine. This is Pup--protein ligase from Corynebacterium urealyticum (strain ATCC 43042 / DSM 7109).